The following is a 339-amino-acid chain: Quinolinate synthase (339 aa).

Iminosuccinate is bound by residues His-63 and Ser-81. Cys-126 is a [4Fe-4S] cluster binding site. Iminosuccinate-binding positions include 152–154 (YVN) and Ser-169. Residue Cys-211 coordinates [4Fe-4S] cluster. Iminosuccinate is bound by residues 237–239 (HPE) and Thr-254. Cys-297 contacts [4Fe-4S] cluster.

The protein belongs to the quinolinate synthase family. Type 2 subfamily. [4Fe-4S] cluster is required as a cofactor.

It is found in the cytoplasm. It carries out the reaction iminosuccinate + dihydroxyacetone phosphate = quinolinate + phosphate + 2 H2O + H(+). It functions in the pathway cofactor biosynthesis; NAD(+) biosynthesis; quinolinate from iminoaspartate: step 1/1. Catalyzes the condensation of iminoaspartate with dihydroxyacetone phosphate to form quinolinate. This is Quinolinate synthase from Xylella fastidiosa (strain Temecula1 / ATCC 700964).